Reading from the N-terminus, the 286-residue chain is Undecaprenyl-diphosphatase (286 aa).

7 helical membrane-spanning segments follow: residues Pro-50–Phe-70, Leu-97–Leu-117, Leu-127–Ala-147, Gly-165–Ser-185, Ala-200–Leu-220, Gly-230–Ile-250, and Thr-262–Gly-282.

The protein belongs to the UppP family.

It localises to the cell inner membrane. It catalyses the reaction di-trans,octa-cis-undecaprenyl diphosphate + H2O = di-trans,octa-cis-undecaprenyl phosphate + phosphate + H(+). In terms of biological role, catalyzes the dephosphorylation of undecaprenyl diphosphate (UPP). Confers resistance to bacitracin. The polypeptide is Undecaprenyl-diphosphatase (Synechococcus sp. (strain WH7803)).